A 126-amino-acid polypeptide reads, in one-letter code: Small ribosomal subunit protein uS13 (126 aa).

The disordered stretch occupies residues Leu99–Lys126. Basic residues predominate over residues Ala108 to Lys126.

It belongs to the universal ribosomal protein uS13 family. In terms of assembly, part of the 30S ribosomal subunit. Forms a loose heterodimer with protein S19. Forms two bridges to the 50S subunit in the 70S ribosome.

Its function is as follows. Located at the top of the head of the 30S subunit, it contacts several helices of the 16S rRNA. In the 70S ribosome it contacts the 23S rRNA (bridge B1a) and protein L5 of the 50S subunit (bridge B1b), connecting the 2 subunits; these bridges are implicated in subunit movement. Contacts the tRNAs in the A and P-sites. The protein is Small ribosomal subunit protein uS13 of Porphyromonas gingivalis (strain ATCC 33277 / DSM 20709 / CIP 103683 / JCM 12257 / NCTC 11834 / 2561).